A 238-amino-acid chain; its full sequence is Probable transcriptional regulatory protein YeeN (238 aa).

The protein belongs to the TACO1 family. YeeN subfamily.

It is found in the cytoplasm. The chain is Probable transcriptional regulatory protein YeeN from Salmonella typhi.